Consider the following 81-residue polypeptide: Cell division protein ZapB (81 aa).

The stretch at 5–81 forms a coiled coil; that stretch reads LEVFEKLEAK…QALLGRMEEV (77 aa). Lysine 10 bears the N6-acetyllysine mark. The segment at 36–67 is disordered; that stretch reads NNSLSQEVQNAQHQREELERENNHLKEQQNGW. Positions 37 to 47 are enriched in polar residues; it reads NSLSQEVQNAQ. Over residues 48 to 62 the composition is skewed to basic and acidic residues; sequence HQREELERENNHLKE.

The protein belongs to the ZapB family. In terms of assembly, homodimer. The ends of the coiled-coil dimer bind to each other, forming polymers. Interacts with FtsZ.

It localises to the cytoplasm. In terms of biological role, non-essential, abundant cell division factor that is required for proper Z-ring formation. It is recruited early to the divisome by direct interaction with FtsZ, stimulating Z-ring assembly and thereby promoting cell division earlier in the cell cycle. Its recruitment to the Z-ring requires functional FtsA or ZipA. This Shigella boydii serotype 4 (strain Sb227) protein is Cell division protein ZapB.